A 220-amino-acid chain; its full sequence is Octanoyltransferase (220 aa).

The region spanning 27 to 208 (PGTADEIWLC…QLARAHGQAV (182 aa)) is the BPL/LPL catalytic domain. Substrate-binding positions include 66-73 (RGGQVTYH), 139-141 (ALG), and 152-154 (GLA). Cysteine 170 acts as the Acyl-thioester intermediate in catalysis.

Belongs to the LipB family.

It localises to the cytoplasm. The enzyme catalyses octanoyl-[ACP] + L-lysyl-[protein] = N(6)-octanoyl-L-lysyl-[protein] + holo-[ACP] + H(+). Its pathway is protein modification; protein lipoylation via endogenous pathway; protein N(6)-(lipoyl)lysine from octanoyl-[acyl-carrier-protein]: step 1/2. In terms of biological role, catalyzes the transfer of endogenously produced octanoic acid from octanoyl-acyl-carrier-protein onto the lipoyl domains of lipoate-dependent enzymes. Lipoyl-ACP can also act as a substrate although octanoyl-ACP is likely to be the physiological substrate. This chain is Octanoyltransferase, found in Bordetella pertussis (strain Tohama I / ATCC BAA-589 / NCTC 13251).